A 258-amino-acid chain; its full sequence is Putative [LysW]-aminoadipate/[LysW]-glutamate kinase (258 aa).

Residues 33–34 (GG), arginine 60, and asparagine 164 each bind substrate.

This sequence belongs to the acetylglutamate kinase family. LysZ subfamily.

The protein localises to the cytoplasm. It carries out the reaction [amino-group carrier protein]-C-terminal-N-(1,4-dicarboxybutan-1-yl)-L-glutamine + ATP = [amino-group carrier protein]-C-terminal-N-(1-carboxy-5-phosphooxy-5-oxopentan-1-yl)-L-glutamine + ADP. The enzyme catalyses [amino-group carrier protein]-C-terminal-gamma-(L-glutamyl)-L-glutamate + ATP = [amino-group carrier protein]-C-terminal-gamma-(5-phospho-L-glutamyl)-L-glutamate + ADP. The protein operates within amino-acid biosynthesis; L-lysine biosynthesis via AAA pathway; L-lysine from L-alpha-aminoadipate (Thermus route): step 2/5. It participates in amino-acid biosynthesis; L-arginine biosynthesis. Its function is as follows. Involved in both the arginine and lysine biosynthetic pathways. Phosphorylates the LysW-bound precursors glutamate (for arginine biosynthesis), respectively alpha-aminoadipate (for lysine biosynthesis). The sequence is that of Putative [LysW]-aminoadipate/[LysW]-glutamate kinase from Caldivirga maquilingensis (strain ATCC 700844 / DSM 13496 / JCM 10307 / IC-167).